The primary structure comprises 464 residues: Glutamate--tRNA ligase (464 aa).

A 'HIGH' region motif is present at residues 10 to 20 (PSPTGHLHLGG). Residues C99, C101, C126, and E128 each contribute to the Zn(2+) site. The 'KMSKS' region motif lies at 236–240 (KLSKR). An ATP-binding site is contributed by K239.

This sequence belongs to the class-I aminoacyl-tRNA synthetase family. Glutamate--tRNA ligase type 1 subfamily. In terms of assembly, monomer. It depends on Zn(2+) as a cofactor.

It localises to the cytoplasm. It catalyses the reaction tRNA(Glu) + L-glutamate + ATP = L-glutamyl-tRNA(Glu) + AMP + diphosphate. In terms of biological role, catalyzes the attachment of glutamate to tRNA(Glu) in a two-step reaction: glutamate is first activated by ATP to form Glu-AMP and then transferred to the acceptor end of tRNA(Glu). This Oleidesulfovibrio alaskensis (strain ATCC BAA-1058 / DSM 17464 / G20) (Desulfovibrio alaskensis) protein is Glutamate--tRNA ligase.